The primary structure comprises 83 residues: Host transcription reprogramming factor 9 (83 aa).

The first 19 residues, 1 to 19, serve as a signal peptide directing secretion; it reads MQFSKITLAIVLYALGTAA. The C2H2-type zinc-finger motif lies at 54–77; that stretch reads YRCDKCEKEFVKGNDFFNHGGRGH.

It localises to the secreted. The protein resides in the host nucleus. Probable secreted effector that translocates into the nuclei of host cells to reprogram the expression of targeted genes by binding on effector binding elements in rice. This chain is Host transcription reprogramming factor 9, found in Pyricularia oryzae (strain 70-15 / ATCC MYA-4617 / FGSC 8958) (Rice blast fungus).